The primary structure comprises 274 residues: tRNA-cytidine(32) 2-sulfurtransferase (274 aa).

Positions Ser-40 to Ser-45 match the PP-loop motif motif. Cys-115, Cys-118, and Cys-206 together coordinate [4Fe-4S] cluster.

The protein belongs to the TtcA family. As to quaternary structure, homodimer. Requires Mg(2+) as cofactor. It depends on [4Fe-4S] cluster as a cofactor.

It is found in the cytoplasm. The catalysed reaction is cytidine(32) in tRNA + S-sulfanyl-L-cysteinyl-[cysteine desulfurase] + AH2 + ATP = 2-thiocytidine(32) in tRNA + L-cysteinyl-[cysteine desulfurase] + A + AMP + diphosphate + H(+). It participates in tRNA modification. In terms of biological role, catalyzes the ATP-dependent 2-thiolation of cytidine in position 32 of tRNA, to form 2-thiocytidine (s(2)C32). The sulfur atoms are provided by the cysteine/cysteine desulfurase (IscS) system. In Pseudomonas putida (strain GB-1), this protein is tRNA-cytidine(32) 2-sulfurtransferase.